A 421-amino-acid chain; its full sequence is O-acetyl-L-homoserine sulfhydrylase 1 (421 aa).

N6-(pyridoxal phosphate)lysine is present on Lys-206.

This sequence belongs to the trans-sulfuration enzymes family. As to quaternary structure, homotetramer. The cofactor is pyridoxal 5'-phosphate.

The catalysed reaction is O-acetyl-L-homoserine + hydrogen sulfide = L-homocysteine + acetate. Its pathway is amino-acid biosynthesis; L-methionine biosynthesis via de novo pathway; L-homocysteine from O-acetyl-L-homoserine: step 1/1. Its activity is regulated as follows. Inhibited by the carbonyl reagents hydroxylamine and phenylhydrazine. Also inhibited by methionine and propargylglycine. Catalyzes the conversion of O-acetyl-L-homoserine (OAH) into homocysteine in the methionine biosynthesis pathway. Has weak activity with O-acetyl-L-serine, O-phospho-L-serine, L-serine, O-succinyl-L-homoserine and L-homoserine. Shows low CTT beta-lyase activity and very low CTT gamma-synthase activity. The chain is O-acetyl-L-homoserine sulfhydrylase 1 from Thermus thermophilus (strain ATCC 27634 / DSM 579 / HB8).